Consider the following 525-residue polypeptide: NADH-quinone oxidoreductase subunit N (525 aa).

Transmembrane regions (helical) follow at residues 26–46 (LSPM…DAFA), 53–73 (VLQP…VVLL), 90–110 (PTLF…LLVA), 143–163 (VQTE…LFVA), 167–187 (LLVM…LCGL), 202–222 (YFLL…FAYG), 246–266 (LYLS…AAPF), 278–298 (PTPI…GALL), 314–334 (PVIW…ALTQ), 341–361 (LAYS…GSNI), 368–388 (MFYL…VSLV), 411–431 (LAGT…TSGF), 449–469 (LVVV…RVIV), and 487–507 (PTLT…LGVA).

This sequence belongs to the complex I subunit 2 family. NDH-1 is composed of 14 different subunits. Subunits NuoA, H, J, K, L, M, N constitute the membrane sector of the complex.

Its subcellular location is the cell membrane. The catalysed reaction is a quinone + NADH + 5 H(+)(in) = a quinol + NAD(+) + 4 H(+)(out). NDH-1 shuttles electrons from NADH, via FMN and iron-sulfur (Fe-S) centers, to quinones in the respiratory chain. The immediate electron acceptor for the enzyme in this species is believed to be a menaquinone. Couples the redox reaction to proton translocation (for every two electrons transferred, four hydrogen ions are translocated across the cytoplasmic membrane), and thus conserves the redox energy in a proton gradient. The sequence is that of NADH-quinone oxidoreductase subunit N from Parafrankia sp. (strain EAN1pec).